We begin with the raw amino-acid sequence, 375 residues long: Metal tolerance protein B (375 aa).

Residues M1–R57 are Cytoplasmic-facing. The helical transmembrane segment at L58–K78 threads the bilayer. At A79–V84 the chain is on the vacuolar side. Residues M85–I105 traverse the membrane as a helical segment. The Cytoplasmic portion of the chain corresponds to K106–R122. The chain crosses the membrane as a helical span at residues L123 to I143. Over H144–E160 the chain is Vacuolar. A helical transmembrane segment spans residues I161–G181. Residues H182–H206 form a required for zinc-binding region. The Cytoplasmic portion of the chain corresponds to H182–L240. Residues H241 to V261 traverse the membrane as a helical segment. The Vacuolar portion of the chain corresponds to K262–K264. Residues W265–L285 form a helical membrane-spanning segment. Residues P286–E375 are Cytoplasmic-facing.

This sequence belongs to the cation diffusion facilitator (CDF) transporter (TC 2.A.4) family. SLC30A subfamily.

Its subcellular location is the vacuole membrane. Functionally, involved in sequestration of excess zinc in the cytoplasm into vacuoles to maintain zinc homeostasis. The chain is Metal tolerance protein B (MTPB) from Arabidopsis thaliana (Mouse-ear cress).